We begin with the raw amino-acid sequence, 285 residues long: Energy-coupling factor transporter ATP-binding protein EcfA3 (285 aa).

In terms of domain architecture, ABC transporter spans 6-242 (LKVEELNYNY…KEVIRKVNLR (237 aa)). 39 to 46 (GGNGVGKS) serves as a coordination point for ATP.

This sequence belongs to the ABC transporter superfamily. Energy-coupling factor EcfA family. Forms a stable energy-coupling factor (ECF) transporter complex composed of 2 membrane-embedded substrate-binding proteins (S component), 2 ATP-binding proteins (A component) and 2 transmembrane proteins (T component).

It localises to the cell membrane. Functionally, ATP-binding (A) component of a common energy-coupling factor (ECF) ABC-transporter complex. Unlike classic ABC transporters this ECF transporter provides the energy necessary to transport a number of different substrates. In Clostridium perfringens (strain ATCC 13124 / DSM 756 / JCM 1290 / NCIMB 6125 / NCTC 8237 / Type A), this protein is Energy-coupling factor transporter ATP-binding protein EcfA3.